Reading from the N-terminus, the 399-residue chain is V-set and immunoglobulin domain-containing protein 4 (399 aa).

Residues 1–19 form the signal peptide; that stretch reads MGILLGLLLLGHLTVDTYG. Topologically, residues 20–283 are extracellular; it reads RPILEVPESV…TSAGPGKSLP (264 aa). Ig-like domains follow at residues 21-131 and 143-226; these read PILE…DKIT and PTVT…SDIV. 2 disulfides stabilise this stretch: Cys-41/Cys-113 and Cys-165/Cys-211. The chain crosses the membrane as a helical span at residues 284–304; the sequence is VFAIILIISLCCMVVFTMAYI. Residues 305–399 lie on the Cytoplasmic side of the membrane; that stretch reads MLCRKTSQQE…FLATEGKSVC (95 aa).

Abundantly expressed in several fetal tissues. In adult tissues, highest expression in lung and placenta. Expressed in resting macrophages.

It is found in the membrane. Phagocytic receptor, strong negative regulator of T-cell proliferation and IL2 production. Potent inhibitor of the alternative complement pathway convertases. In Homo sapiens (Human), this protein is V-set and immunoglobulin domain-containing protein 4 (VSIG4).